The primary structure comprises 276 residues: MEQEDDKQYSREAVFAGRRVSVVGSDARSRGRVPGYASSSLYRESGIISARQLALLQRMLPRLRLEQLFRCEWLQQRLARGLALGREEVRQILLCAAQDDDGWCSELGDRVNLAVPQSMIDWVLLPVYGWWESLLDQAIPGWRLSLVELETQSRQLRVKSEFWSRVAELEPEQAREELARVAKCQARTQEQVAELAGKLETASALAKSAWPNWQRGMATLLASGGLAGFEPIPEVLECLWQPLCRLDDDVGAADAVQAWLHERNLCQAQDHFYWQS.

In terms of assembly, can form homotrimer. Interacts with ExsA; this interaction inhibits ExsA activity. Interacts with ExsC; this interaction dissociates the ExsD-ExsA complex.

Functionally, negative regulator of the type III secretion system regulon. Acts by disrupting transcriptional activator ExsA self-association and DNA-binding activity in absence of inducing signals. Upon host cell contact, this interaction is disrupted by the anti-antiactivator protein ExsC leading to ExsA activation. The sequence is that of Transcriptional antiactivator ExsD (exsD) from Pseudomonas aeruginosa (strain ATCC 15692 / DSM 22644 / CIP 104116 / JCM 14847 / LMG 12228 / 1C / PRS 101 / PAO1).